The primary structure comprises 477 residues: E3 ubiquitin-protein ligase TRIM17 (477 aa).

Residues 16 to 66 (CSICLDYFTDPVMTACGHNFCRECIQMSWEKGKVKKGKKKQKGSFPCPECR) form an RING-type zinc finger. The segment at 94–135 (QKRDLCQAHQEPLKLFCQDDQSPICVVCREAQEHRMHRVLPL) adopts a B box-type zinc-finger fold. 4 residues coordinate Zn(2+): cysteine 99, histidine 102, cysteine 121, and histidine 127. Residues 135–226 (LDEAAREYKL…KLQDSKASLD (92 aa)) adopt a coiled-coil conformation. Positions 276–475 (AIKTLCRVPG…MVISTVTMWV (200 aa)) constitute a B30.2/SPRY domain.

This sequence belongs to the TRIM/RBCC family. Interacts (via coiled coil) with TRIM44 (via coiled coil). Interacts with TRIM28; this interaction prevents TRIM28 activity on BCL2A1. Interacts with TRIM41; this interaction prevents TRIM41 activity on ZSCAN2. Interacts with BECN1. Interacts with NFATC3 and NFATC4; these interactions prevent NFATC3 and NFATC4 nuclear localization. Auto-ubiquitinated. Almost exclusively in the testis.

It localises to the cytoplasm. The protein localises to the lysosome. It catalyses the reaction S-ubiquitinyl-[E2 ubiquitin-conjugating enzyme]-L-cysteine + [acceptor protein]-L-lysine = [E2 ubiquitin-conjugating enzyme]-L-cysteine + N(6)-ubiquitinyl-[acceptor protein]-L-lysine.. The protein operates within protein modification; protein ubiquitination. Functionally, E3 ubiquitin ligase that plays important roles in the regulation of neuronal apoptosis, selective autophagy or cell proliferation. Stimulates the degradation of kinetochore ZW10 interacting protein ZWINT in a proteasome-dependent manner, leading to negative regulation of cell proliferation. Inhibits autophagic degradation of diverse known targets while contributing to autophagy of midbodies. Autophagy-inhibitory activity involves MCL1, which TRIM17 assembles into complexes with the key autophagy regulator BECN1. Controls neuronal apoptosis by mediating ubiquitination and degradation of MCL1 to initiate neuronal death. In addition, regulates NFAT transcription factors NFATC3 and NFATC4 activities by preventing their nuclear localization, thus inhibiting their transcriptional activities. Decreases TRIM41-mediated degradation of ZSCAN2 thereby stimulating alpha-synuclein/SNCA transcription in neuronal cells. Prevents the E3 ubiquitin-ligase activity of TRIM28 and its interaction with anti-apoptotic BCL2A1, blocking TRIM28 from ubiquitinating BCL2A1. This is E3 ubiquitin-protein ligase TRIM17 (Trim17) from Mus musculus (Mouse).